We begin with the raw amino-acid sequence, 148 residues long: Succinate dehydrogenase assembly factor 3, mitochondrial (148 aa).

The transit peptide at 1–12 (MYALRPTLRRSA) directs the protein to the mitochondrion. The disordered stretch occupies residues 129–148 (RGTEGDLEDGDGGESGQKSQ).

This sequence belongs to the complex I LYR family. SDHAF3 subfamily. As to quaternary structure, interacts with the iron-sulfur protein subunit within the SDH catalytic dimer.

It is found in the mitochondrion matrix. Its function is as follows. Plays an essential role in the assembly of succinate dehydrogenase (SDH), an enzyme complex (also referred to as respiratory complex II) that is a component of both the tricarboxylic acid (TCA) cycle and the mitochondrial electron transport chain, and which couples the oxidation of succinate to fumarate with the reduction of ubiquinone (coenzyme Q) to ubiquinol. Promotes maturation of the iron-sulfur protein subunit of the SDH catalytic dimer, protecting it from the deleterious effects of oxidants. May act together with SDHAF1. The polypeptide is Succinate dehydrogenase assembly factor 3, mitochondrial (Neurospora crassa (strain ATCC 24698 / 74-OR23-1A / CBS 708.71 / DSM 1257 / FGSC 987)).